The chain runs to 557 residues: Protein NRT1/ PTR FAMILY 5.14 (557 aa).

Helical transmembrane passes span 35 to 55 (AALFIIGVEVAERFAYYGIGS) and 78 to 98 (AWSGIATLLPVLGAFVADAFL). Phosphothreonine is present on T103. The next 10 helical transmembrane spans lie at 104-124 (IIISSLIYVLGLAFLTLSAFL), 133-153 (SSTSSFLNVLFFFSLYLVAIG), 183-203 (FFNWWYLSLSAGICFAILVVV), 209-229 (FSWAFGFGIPCVFMVISLVLF), 320-340 (IPVWFTTLAYAIPYAQYMTFF), 357-377 (IPPASLQVFIGISIVLFVPIY), 401-421 (IGTGIVLSTITMVIAALVEFK), 443-463 (IWWLIPQYLLLGLADVYTLVG), 479-499 (IGLALYLSALGVGSLLSSLLI), and 526-546 (YFYWLLAIVSAVGFFTFLFIS).

The protein belongs to the major facilitator superfamily. Proton-dependent oligopeptide transporter (POT/PTR) (TC 2.A.17) family. As to expression, expressed in roots.

The protein localises to the membrane. This chain is Protein NRT1/ PTR FAMILY 5.14 (NPF5.14), found in Arabidopsis thaliana (Mouse-ear cress).